Reading from the N-terminus, the 135-residue chain is Large ribosomal subunit protein uL16c (135 aa).

The protein belongs to the universal ribosomal protein uL16 family. As to quaternary structure, part of the 50S ribosomal subunit.

Its subcellular location is the plastid. It localises to the chloroplast. This Ranunculus macranthus (Large buttercup) protein is Large ribosomal subunit protein uL16c.